A 443-amino-acid chain; its full sequence is Thymidine phosphorylase (443 aa).

It belongs to the thymidine/pyrimidine-nucleoside phosphorylase family. Homodimer.

It catalyses the reaction thymidine + phosphate = 2-deoxy-alpha-D-ribose 1-phosphate + thymine. The protein operates within pyrimidine metabolism; dTMP biosynthesis via salvage pathway; dTMP from thymine: step 1/2. In terms of biological role, the enzymes which catalyze the reversible phosphorolysis of pyrimidine nucleosides are involved in the degradation of these compounds and in their utilization as carbon and energy sources, or in the rescue of pyrimidine bases for nucleotide synthesis. The protein is Thymidine phosphorylase of Aeromonas salmonicida (strain A449).